The chain runs to 147 residues: Small ribosomal subunit protein uS12 (147 aa).

The protein belongs to the universal ribosomal protein uS12 family. Part of the 30S ribosomal subunit.

Its function is as follows. With S4 and S5 plays an important role in translational accuracy. Located at the interface of the 30S and 50S subunits. This is Small ribosomal subunit protein uS12 from Methanococcus maripaludis (strain C5 / ATCC BAA-1333).